A 330-amino-acid chain; its full sequence is tRNA N6-adenosine threonylcarbamoyltransferase (330 aa).

Residues histidine 110 and histidine 114 each coordinate Fe cation. Substrate-binding positions include leucine 133–glycine 137, aspartate 166, glycine 179, and asparagine 268. Residue aspartate 296 coordinates Fe cation.

This sequence belongs to the KAE1 / TsaD family. Requires Fe(2+) as cofactor.

The protein resides in the cytoplasm. It catalyses the reaction L-threonylcarbamoyladenylate + adenosine(37) in tRNA = N(6)-L-threonylcarbamoyladenosine(37) in tRNA + AMP + H(+). In terms of biological role, required for the formation of a threonylcarbamoyl group on adenosine at position 37 (t(6)A37) in tRNAs that read codons beginning with adenine. Is involved in the transfer of the threonylcarbamoyl moiety of threonylcarbamoyl-AMP (TC-AMP) to the N6 group of A37, together with TsaE and TsaB. TsaD likely plays a direct catalytic role in this reaction. The sequence is that of tRNA N6-adenosine threonylcarbamoyltransferase from Kosmotoga olearia (strain ATCC BAA-1733 / DSM 21960 / TBF 19.5.1).